Consider the following 301-residue polypeptide: Glycine--tRNA ligase alpha subunit (301 aa).

This sequence belongs to the class-II aminoacyl-tRNA synthetase family. Tetramer of two alpha and two beta subunits.

The protein resides in the cytoplasm. The catalysed reaction is tRNA(Gly) + glycine + ATP = glycyl-tRNA(Gly) + AMP + diphosphate. The sequence is that of Glycine--tRNA ligase alpha subunit from Bordetella avium (strain 197N).